We begin with the raw amino-acid sequence, 191 residues long: Large ribosomal subunit protein bL9 (191 aa).

The interval 151 to 191 is disordered; the sequence is AERQAKGESLTSADAIYGVDEDALKPEDFFNPEAEIESEEE.

It belongs to the bacterial ribosomal protein bL9 family.

Binds to the 23S rRNA. This Sinorhizobium medicae (strain WSM419) (Ensifer medicae) protein is Large ribosomal subunit protein bL9.